The following is a 671-amino-acid chain: Anti-sigma-I factor RsgI2 (671 aa).

Residues 1–57 (MSHYTGIILKLESDRAIVLTDGLDFMELKLKPGMQRGQHVIFDESDLYSAGLITRYK) are Cytoplasmic-facing. Residues 4–51 (YTGIILKLESDRAIVLTDGLDFMELKLKPGMQRGQHVIFDESDLYSAG) form the RsgI N-terminal anti-sigma domain. A helical transmembrane segment spans residues 58-78 (SIIMPFSAFAAAAAVFLVILF). Residues 79–671 (SLRFVSISQE…SGTLYWGIEP (593 aa)) are Extracellular-facing. Disordered stretches follow at residues 290-323 (TEAQ…IPHT) and 359-505 (PVPV…APTE). Residues 359-379 (PVPVSTPKPVSTPAYSSTPTP) show a composition bias toward low complexity. Residues 380-400 (ESTPVPVSTPKPASTPTPAST) show a composition bias toward pro residues. The span at 401 to 425 (PKPVSTPTHVSTPKPISTPTSTPRP) shows a compositional bias: low complexity. Residues 426–446 (ASTPKPTSTPTPESTPKPTST) are compositionally biased toward pro residues. Positions 447–491 (PAPVSTPTSTPIPTYTSTPASTPIPAYTSTPTSIPTLTPATSPAP) are enriched in low complexity. A compositionally biased stretch (pro residues) spans 492–502 (TSSPTPIPSPA). A CBM3 domain is found at 508 to 671 (LLTKIELQAY…SGTLYWGIEP (164 aa)). Ca(2+) contacts are provided by T554, D556, D637, S640, and D641.

In terms of assembly, interacts (via RsgI N-terminal anti-sigma domain) with SigI2.

It is found in the cell membrane. Its function is as follows. Anti-sigma factor for SigI2. Negatively regulates SigI2 activity through direct interaction. Binding of the polysaccharide substrate to the extracellular C-terminal sensing domain of RsgI2 may induce a conformational change in its N-terminal cytoplasmic region, leading to the release and activation of SigI2. This is Anti-sigma-I factor RsgI2 from Acetivibrio thermocellus (strain ATCC 27405 / DSM 1237 / JCM 9322 / NBRC 103400 / NCIMB 10682 / NRRL B-4536 / VPI 7372) (Clostridium thermocellum).